The primary structure comprises 179 residues: Interleukin-22 (179 aa).

The first 33 residues, 1–33, serve as a signal peptide directing secretion; that stretch reads MAALQKSVSSFLMGTLATSCLLLLALLVQGGAA. Disulfide bonds link Cys40–Cys132 and Cys89–Cys178. N-linked (GlcNAc...) asparagine glycans are attached at residues Asn54, Asn68, and Asn97.

This sequence belongs to the IL-10 family.

The protein resides in the secreted. Cytokine that plays a critical role in modulating tissue responses during inflammation. Plays an essential role in the regeneration of epithelial cells to maintain barrier function after injury and for the prevention of further tissue damage. Unlike most of the cytokines, has no effect on immune cells. Signals through a heterodimeric receptor composed of two subunits, the specific receptor IL22RA1 which is present on non-immune cells in many organs and the shared subunit IL10RB. Ligation of IL22RA1 with IL22 induces activation of the tyrosine kinases JAK1 and TYK2, which in turn activates STAT3. In turn, promotes cell survival and proliferation through STAT3, ERK1/2 and PI3K/AKT pathways. Promotes phosphorylation of GSK3B at 'Ser-9' and CTTN. Promotes epithelial cell spreading. This chain is Interleukin-22 (IL22), found in Homo sapiens (Human).